The chain runs to 103 residues: Large ribosomal subunit protein bL21 (103 aa).

The protein belongs to the bacterial ribosomal protein bL21 family. Part of the 50S ribosomal subunit. Contacts protein L20.

Functionally, this protein binds to 23S rRNA in the presence of protein L20. In Aliivibrio fischeri (strain ATCC 700601 / ES114) (Vibrio fischeri), this protein is Large ribosomal subunit protein bL21.